Consider the following 291-residue polypeptide: Shikimate dehydrogenase (NADP(+)) (291 aa).

Residues 26–28 and serine 73 each bind shikimate; that span reads SLS. The Proton acceptor role is filled by lysine 77. Shikimate is bound by residues asparagine 98 and aspartate 113. NADP(+) is bound by residues 137-141 and valine 238; that span reads GAGGA. Tyrosine 240 contributes to the shikimate binding site. Residue glycine 261 coordinates NADP(+).

The protein belongs to the shikimate dehydrogenase family. Homodimer.

It catalyses the reaction shikimate + NADP(+) = 3-dehydroshikimate + NADPH + H(+). It functions in the pathway metabolic intermediate biosynthesis; chorismate biosynthesis; chorismate from D-erythrose 4-phosphate and phosphoenolpyruvate: step 4/7. Involved in the biosynthesis of the chorismate, which leads to the biosynthesis of aromatic amino acids. Catalyzes the reversible NADPH linked reduction of 3-dehydroshikimate (DHSA) to yield shikimate (SA). In Listeria monocytogenes serotype 4b (strain F2365), this protein is Shikimate dehydrogenase (NADP(+)).